A 238-amino-acid polypeptide reads, in one-letter code: 2-C-methyl-D-erythritol 4-phosphate cytidylyltransferase (238 aa).

This sequence belongs to the IspD/TarI cytidylyltransferase family. IspD subfamily.

The catalysed reaction is 2-C-methyl-D-erythritol 4-phosphate + CTP + H(+) = 4-CDP-2-C-methyl-D-erythritol + diphosphate. It participates in isoprenoid biosynthesis; isopentenyl diphosphate biosynthesis via DXP pathway; isopentenyl diphosphate from 1-deoxy-D-xylulose 5-phosphate: step 2/6. Functionally, catalyzes the formation of 4-diphosphocytidyl-2-C-methyl-D-erythritol from CTP and 2-C-methyl-D-erythritol 4-phosphate (MEP). The polypeptide is 2-C-methyl-D-erythritol 4-phosphate cytidylyltransferase (Alteromonas mediterranea (strain DSM 17117 / CIP 110805 / LMG 28347 / Deep ecotype)).